Consider the following 813-residue polypeptide: Kinesin-like protein KIN-8B (813 aa).

Positions 14-345 (TLTVAVKCRP…LKYADRAKEI (332 aa)) constitute a Kinesin motor domain. 104 to 111 (GSTGSGKT) lines the ATP pocket. A coiled-coil region spans residues 349 to 391 (IQKNIGTIDTHMSDYQRMIDNLQSEVSQLKTQLAEKESQLSIK). Disordered stretches follow at residues 664-694 (GSRP…PRMA) and 756-813 (AVST…RQHQ). 3 stretches are compositionally biased toward polar residues: residues 682–694 (YPQT…PRMA), 761–791 (GARN…NSHT), and 804–813 (KGNNTQRQHQ).

Belongs to the TRAFAC class myosin-kinesin ATPase superfamily. Kinesin family. KIN-8 subfamily.

The sequence is that of Kinesin-like protein KIN-8B from Arabidopsis thaliana (Mouse-ear cress).